Here is a 126-residue protein sequence, read N- to C-terminus: Holo-[acyl-carrier-protein] synthase (126 aa).

2 residues coordinate Mg(2+): Asp9 and Glu58.

Belongs to the P-Pant transferase superfamily. AcpS family. It depends on Mg(2+) as a cofactor.

It is found in the cytoplasm. It catalyses the reaction apo-[ACP] + CoA = holo-[ACP] + adenosine 3',5'-bisphosphate + H(+). Its function is as follows. Transfers the 4'-phosphopantetheine moiety from coenzyme A to a Ser of acyl-carrier-protein. The polypeptide is Holo-[acyl-carrier-protein] synthase (Escherichia coli O127:H6 (strain E2348/69 / EPEC)).